A 401-amino-acid chain; its full sequence is 8-amino-7-oxononanoate synthase (401 aa).

A substrate-binding site is contributed by Arg-24. 111–112 (GF) is a pyridoxal 5'-phosphate binding site. Position 137 (His-137) interacts with substrate. Residues Ser-183, His-211, and Thr-240 each coordinate pyridoxal 5'-phosphate. Lys-243 bears the N6-(pyridoxal phosphate)lysine mark. Position 357 (Thr-357) interacts with substrate.

It belongs to the class-II pyridoxal-phosphate-dependent aminotransferase family. BioF subfamily. In terms of assembly, homodimer. The cofactor is pyridoxal 5'-phosphate.

The catalysed reaction is 6-carboxyhexanoyl-[ACP] + L-alanine + H(+) = (8S)-8-amino-7-oxononanoate + holo-[ACP] + CO2. It participates in cofactor biosynthesis; biotin biosynthesis. Functionally, catalyzes the decarboxylative condensation of pimeloyl-[acyl-carrier protein] and L-alanine to produce 8-amino-7-oxononanoate (AON), [acyl-carrier protein], and carbon dioxide. The polypeptide is 8-amino-7-oxononanoate synthase (Xylella fastidiosa (strain 9a5c)).